The primary structure comprises 236 residues: 7-cyano-7-deazaguanine synthase (236 aa).

Residue Cys7 to Ala17 coordinates ATP. Cys185, Cys193, Cys196, and Cys199 together coordinate Zn(2+).

The protein belongs to the QueC family. Zn(2+) is required as a cofactor.

It catalyses the reaction 7-carboxy-7-deazaguanine + NH4(+) + ATP = 7-cyano-7-deazaguanine + ADP + phosphate + H2O + H(+). It participates in purine metabolism; 7-cyano-7-deazaguanine biosynthesis. In terms of biological role, catalyzes the ATP-dependent conversion of 7-carboxy-7-deazaguanine (CDG) to 7-cyano-7-deazaguanine (preQ(0)). The protein is 7-cyano-7-deazaguanine synthase of Rhizobium etli (strain CIAT 652).